The primary structure comprises 129 residues: MPTYNQLVRFGRKSKTRKSKSPALESNPFKSGVCLVVKTVTPKKPNSALRKIATVRLSNKRTVNAYIPGEKHSVKEHDRVLVRGGQVPDLPGVKYHIVLGAYDISGVKGRKQGRSRYGAPCKQIAVTKK.

Asp-89 is subject to 3-methylthioaspartic acid.

This sequence belongs to the universal ribosomal protein uS12 family. In terms of assembly, part of the 30S ribosomal subunit. Contacts proteins S8 and S17. May interact with IF1 in the 30S initiation complex.

Its function is as follows. With S4 and S5 plays an important role in translational accuracy. In terms of biological role, interacts with and stabilizes bases of the 16S rRNA that are involved in tRNA selection in the A site and with the mRNA backbone. Located at the interface of the 30S and 50S subunits, it traverses the body of the 30S subunit contacting proteins on the other side and probably holding the rRNA structure together. The combined cluster of proteins S8, S12 and S17 appears to hold together the shoulder and platform of the 30S subunit. The protein is Small ribosomal subunit protein uS12 of Rickettsia akari (strain Hartford).